A 456-amino-acid chain; its full sequence is Bifunctional protein GlmU (456 aa).

The pyrophosphorylase stretch occupies residues Met1 to Arg229. Residues Leu11–Gly14, Lys25, Gln76, Gly81–Thr82, Tyr103–Asp105, Gly140, Glu154, Asn169, and Asn227 contribute to the UDP-N-acetyl-alpha-D-glucosamine site. Asp105 serves as a coordination point for Mg(2+). Asn227 contacts Mg(2+). Residues Leu230–Ala250 form a linker region. The interval Gly251–Lys456 is N-acetyltransferase. Residues Arg333 and Lys351 each coordinate UDP-N-acetyl-alpha-D-glucosamine. The active-site Proton acceptor is His363. Residues Tyr366 and Asn377 each contribute to the UDP-N-acetyl-alpha-D-glucosamine site. Acetyl-CoA contacts are provided by residues Ala380, Asn386 to Tyr387, Ser405, Ala423, and Arg440.

This sequence in the N-terminal section; belongs to the N-acetylglucosamine-1-phosphate uridyltransferase family. It in the C-terminal section; belongs to the transferase hexapeptide repeat family. In terms of assembly, homotrimer. Mg(2+) serves as cofactor.

The protein resides in the cytoplasm. The catalysed reaction is alpha-D-glucosamine 1-phosphate + acetyl-CoA = N-acetyl-alpha-D-glucosamine 1-phosphate + CoA + H(+). It carries out the reaction N-acetyl-alpha-D-glucosamine 1-phosphate + UTP + H(+) = UDP-N-acetyl-alpha-D-glucosamine + diphosphate. It functions in the pathway nucleotide-sugar biosynthesis; UDP-N-acetyl-alpha-D-glucosamine biosynthesis; N-acetyl-alpha-D-glucosamine 1-phosphate from alpha-D-glucosamine 6-phosphate (route II): step 2/2. It participates in nucleotide-sugar biosynthesis; UDP-N-acetyl-alpha-D-glucosamine biosynthesis; UDP-N-acetyl-alpha-D-glucosamine from N-acetyl-alpha-D-glucosamine 1-phosphate: step 1/1. Its pathway is bacterial outer membrane biogenesis; LPS lipid A biosynthesis. In terms of biological role, catalyzes the last two sequential reactions in the de novo biosynthetic pathway for UDP-N-acetylglucosamine (UDP-GlcNAc). The C-terminal domain catalyzes the transfer of acetyl group from acetyl coenzyme A to glucosamine-1-phosphate (GlcN-1-P) to produce N-acetylglucosamine-1-phosphate (GlcNAc-1-P), which is converted into UDP-GlcNAc by the transfer of uridine 5-monophosphate (from uridine 5-triphosphate), a reaction catalyzed by the N-terminal domain. In Escherichia coli O157:H7 (strain EC4115 / EHEC), this protein is Bifunctional protein GlmU.